The sequence spans 359 residues: Histidinol-phosphate aminotransferase (359 aa).

Lys212 is subject to N6-(pyridoxal phosphate)lysine.

The protein belongs to the class-II pyridoxal-phosphate-dependent aminotransferase family. Histidinol-phosphate aminotransferase subfamily. As to quaternary structure, homodimer. The cofactor is pyridoxal 5'-phosphate.

The enzyme catalyses L-histidinol phosphate + 2-oxoglutarate = 3-(imidazol-4-yl)-2-oxopropyl phosphate + L-glutamate. Its pathway is amino-acid biosynthesis; L-histidine biosynthesis; L-histidine from 5-phospho-alpha-D-ribose 1-diphosphate: step 7/9. This chain is Histidinol-phosphate aminotransferase, found in Buchnera aphidicola subsp. Melaphis rhois.